Consider the following 780-residue polypeptide: Lethal(3)malignant brain tumor-like protein 3 (780 aa).

Residues 1-64 (MTESASSTSG…VKKATATTTW (64 aa)) form an interaction with RBPJ. Required for transcription repressor activity on Notch target genes region. Residues 149 to 220 (DKDQKEERDV…RKRRGDSAVL (72 aa)) are disordered. Acidic residues-rich tracts occupy residues 157-166 (DVEEDNEEED) and 185-194 (EDGEERDDEM). 3 MBT repeats span residues 232–332 (WCWA…LHPP), 340–439 (FNWQ…LITP), and 448–543 (FSWD…LQPP). Residues 549–593 (LMEASEHGGCSTPGCKGIGHFKRARHLGPHSAANCPYSEINLNKD) form a CCHHC-type; degenerate zinc finger. A disordered region spans residues 597-665 (PDRLSGEMPP…GAREEPTVQQ (69 aa)). The segment at 600 to 710 (LSGEMPPASP…PASKVSKWST (111 aa)) is interaction with DCAF5. S608 carries the post-translational modification Phosphoserine. K637 participates in a covalent cross-link: Glycyl lysine isopeptide (Lys-Gly) (interchain with G-Cter in SUMO2). Residues 643-661 (RTESEMRTSHEARGAREEP) show a composition bias toward basic and acidic residues. Residue K704 forms a Glycyl lysine isopeptide (Lys-Gly) (interchain with G-Cter in SUMO2) linkage. The region spanning 708–772 (WSTDEVSEFI…FNSILMFKAA (65 aa)) is the SAM domain.

As to quaternary structure, interacts with RNF2. Interacts (via SAM domain) with SAMD1 (via SAM domain); the interaction mediates L3MBTL3 binding to chromatin. Interacts with RBPJ; the interaction is required for L3MBTL3 localization to chromatin and is impaired by Notch-derived peptides containing the intracellular domain (NICD). Interacts (via SAM domain) with KDM1A. Interacts with DCAF5. Interacts with DNMT1. Interacts with E2F1. Interacts with SOX2. Interacts with SFMBT1.

It localises to the nucleus. In terms of biological role, is a negative regulator of Notch target genes expression, required for RBPJ-mediated transcriptional repression. It recruits KDM1A to Notch-responsive elements and promotes KDM1A-mediated H3K4me demethylation. Involved in the regulation of ubiquitin-dependent degradation of a set of methylated non-histone proteins, including SOX2, DNMT1 and E2F1. It acts as an adapter recruiting the CRL4-DCAF5 E3 ubiquitin ligase complex to methylated target proteins. Required for normal maturation of myeloid progenitor cells. The protein is Lethal(3)malignant brain tumor-like protein 3 of Homo sapiens (Human).